Consider the following 169-residue polypeptide: Glycine-rich RNA-binding protein 10 (169 aa).

One can recognise an RRM domain in the interval 6–84; that stretch reads YRCFVGGLAW…RTITVNEAQS (79 aa). 2 disordered regions span residues 80 to 101 and 121 to 169; these read NEAQ…YGGR and GYGS…GGGW. Over residues 85-101 the composition is skewed to gly residues; sequence RGGGGGGGRGGGGYGGR.

As to expression, expressed only in roots and stems.

Functionally, possibly has a role in RNA transcription or processing during stress. This is Glycine-rich RNA-binding protein 10 (GRP10) from Brassica napus (Rape).